The primary structure comprises 173 residues: MKKKEIVDDVTMKRAITRITYEIIERNKNLDKIVLAGIKTRGVYIAQRIQERLKQLENLDVPLIELDTKAYRDDVKSEQDTSLIPIEIDGTDVILVDDVLYTGRTIRAAIDNIVSHGRPARVGLAVLVDRGHRELPIRADYVGKNIPTSQSEEIEVLVTEVDGKDSVNIIDPN.

A PRPP-binding motif is present at residues 93–105; the sequence is VILVDDVLYTGRT.

Belongs to the purine/pyrimidine phosphoribosyltransferase family. PyrR subfamily. In terms of assembly, homodimer and homohexamer; in equilibrium.

It carries out the reaction UMP + diphosphate = 5-phospho-alpha-D-ribose 1-diphosphate + uracil. Its function is as follows. Regulates transcriptional attenuation of the pyrimidine nucleotide (pyr) operon by binding in a uridine-dependent manner to specific sites on pyr mRNA. This disrupts an antiterminator hairpin in the RNA and favors formation of a downstream transcription terminator, leading to a reduced expression of downstream genes. In terms of biological role, also displays a weak uracil phosphoribosyltransferase activity which is not physiologically significant. The polypeptide is Bifunctional protein PyrR (Streptococcus thermophilus (strain CNRZ 1066)).